We begin with the raw amino-acid sequence, 874 residues long: Alanine--tRNA ligase (874 aa).

Zn(2+) is bound by residues histidine 564, histidine 568, cysteine 665, and histidine 669.

It belongs to the class-II aminoacyl-tRNA synthetase family. The cofactor is Zn(2+).

Its subcellular location is the cytoplasm. The enzyme catalyses tRNA(Ala) + L-alanine + ATP = L-alanyl-tRNA(Ala) + AMP + diphosphate. In terms of biological role, catalyzes the attachment of alanine to tRNA(Ala) in a two-step reaction: alanine is first activated by ATP to form Ala-AMP and then transferred to the acceptor end of tRNA(Ala). Also edits incorrectly charged Ser-tRNA(Ala) and Gly-tRNA(Ala) via its editing domain. In Paraburkholderia xenovorans (strain LB400), this protein is Alanine--tRNA ligase.